Consider the following 522-residue polypeptide: Putative malate dehydrogenase 1B (522 aa).

The tract at residues 495–522 (EETEKSSSEDTPEAAAAAVSTGDETVPS) is disordered.

This sequence belongs to the LDH/MDH superfamily. MDH type 2 family.

This Branchiostoma floridae (Florida lancelet) protein is Putative malate dehydrogenase 1B (MDH1B).